The sequence spans 311 residues: Protein MGF 360-16R (311 aa).

Belongs to the asfivirus MGF 360 family.

In terms of biological role, plays a role in virus cell tropism, and may be required for efficient virus replication in macrophages. This is Protein MGF 360-16R from African swine fever virus (strain Badajoz 1971 Vero-adapted) (Ba71V).